Consider the following 103-residue polypeptide: Large ribosomal subunit protein bL21 (103 aa).

Belongs to the bacterial ribosomal protein bL21 family. Part of the 50S ribosomal subunit. Contacts protein L20.

This protein binds to 23S rRNA in the presence of protein L20. In Tolumonas auensis (strain DSM 9187 / NBRC 110442 / TA 4), this protein is Large ribosomal subunit protein bL21.